A 397-amino-acid polypeptide reads, in one-letter code: Elongation factor Tu (397 aa).

Positions 10-206 (KPHVNIGTIG…AIDSYIPTPE (197 aa)) constitute a tr-type G domain. A G1 region spans residues 19 to 26 (GHVDHGKT). A GTP-binding site is contributed by 19–26 (GHVDHGKT). Thr-26 contacts Mg(2+). The interval 60-64 (GITIN) is G2. The interval 81-84 (DCPG) is G3. GTP contacts are provided by residues 81 to 85 (DCPGH) and 136 to 139 (NKAD). Positions 136–139 (NKAD) are G4. A G5 region spans residues 174–176 (SAL).

The protein belongs to the TRAFAC class translation factor GTPase superfamily. Classic translation factor GTPase family. EF-Tu/EF-1A subfamily. As to quaternary structure, monomer.

The protein resides in the cytoplasm. It catalyses the reaction GTP + H2O = GDP + phosphate + H(+). GTP hydrolase that promotes the GTP-dependent binding of aminoacyl-tRNA to the A-site of ribosomes during protein biosynthesis. The protein is Elongation factor Tu of Clostridium botulinum (strain Loch Maree / Type A3).